A 285-amino-acid chain; its full sequence is Putative sugar uptake protein lmo0424 (285 aa).

9 consecutive transmembrane segments (helical) span residues 2–21 (SIYL…PIIA), 31–50 (QLLG…FWIL), 55–77 (TVLS…LLQF), 111–133 (WQTV…GVVM), 146–168 (SVSF…YVVT), 172–194 (FDVT…AIGI), 207–229 (VTFN…LATA), 233–255 (VATS…ILIF), and 262–284 (LEWT…LSLL).

It belongs to the GRP transporter (TC 2.A.7.5) family.

It is found in the cell membrane. The polypeptide is Putative sugar uptake protein lmo0424 (Listeria monocytogenes serovar 1/2a (strain ATCC BAA-679 / EGD-e)).